We begin with the raw amino-acid sequence, 401 residues long: 8-amino-7-oxononanoate synthase (401 aa).

Arg24 contributes to the substrate binding site. A pyridoxal 5'-phosphate-binding site is contributed by 111–112; sequence GF. Substrate is bound at residue His137. Residues Ser183, His211, and Thr240 each coordinate pyridoxal 5'-phosphate. An N6-(pyridoxal phosphate)lysine modification is found at Lys243. Residue Thr357 coordinates substrate.

It belongs to the class-II pyridoxal-phosphate-dependent aminotransferase family. BioF subfamily. In terms of assembly, homodimer. Pyridoxal 5'-phosphate serves as cofactor.

The catalysed reaction is 6-carboxyhexanoyl-[ACP] + L-alanine + H(+) = (8S)-8-amino-7-oxononanoate + holo-[ACP] + CO2. Its pathway is cofactor biosynthesis; biotin biosynthesis. Catalyzes the decarboxylative condensation of pimeloyl-[acyl-carrier protein] and L-alanine to produce 8-amino-7-oxononanoate (AON), [acyl-carrier protein], and carbon dioxide. In Xanthomonas oryzae pv. oryzae (strain MAFF 311018), this protein is 8-amino-7-oxononanoate synthase.